Here is a 147-residue protein sequence, read N- to C-terminus: UPF0306 protein YhbP (147 aa).

The protein belongs to the UPF0306 family.

In Salmonella choleraesuis (strain SC-B67), this protein is UPF0306 protein YhbP.